Consider the following 442-residue polypeptide: UDP-N-acetylglucosamine 1-carboxyvinyltransferase (442 aa).

22 to 23 (KN) is a binding site for phosphoenolpyruvate. UDP-N-acetyl-alpha-D-glucosamine is bound at residue Arg-94. The active-site Proton donor is the Asp-119. Residues Asp-309 and Val-331 each coordinate UDP-N-acetyl-alpha-D-glucosamine.

It belongs to the EPSP synthase family. MurA subfamily.

The protein resides in the cytoplasm. It carries out the reaction phosphoenolpyruvate + UDP-N-acetyl-alpha-D-glucosamine = UDP-N-acetyl-3-O-(1-carboxyvinyl)-alpha-D-glucosamine + phosphate. The protein operates within cell wall biogenesis; peptidoglycan biosynthesis. Its function is as follows. Cell wall formation. Adds enolpyruvyl to UDP-N-acetylglucosamine. The sequence is that of UDP-N-acetylglucosamine 1-carboxyvinyltransferase from Chlamydia muridarum (strain MoPn / Nigg).